Here is a 184-residue protein sequence, read N- to C-terminus: ATP synthase subunit b, chloroplastic (184 aa).

Residues 27-49 (LATNLINLSVVLGVLIFFGKGVL) form a helical membrane-spanning segment.

The protein belongs to the ATPase B chain family. In terms of assembly, F-type ATPases have 2 components, F(1) - the catalytic core - and F(0) - the membrane proton channel. F(1) has five subunits: alpha(3), beta(3), gamma(1), delta(1), epsilon(1). F(0) has four main subunits: a(1), b(1), b'(1) and c(10-14). The alpha and beta chains form an alternating ring which encloses part of the gamma chain. F(1) is attached to F(0) by a central stalk formed by the gamma and epsilon chains, while a peripheral stalk is formed by the delta, b and b' chains.

Its subcellular location is the plastid. The protein localises to the chloroplast thylakoid membrane. Its function is as follows. F(1)F(0) ATP synthase produces ATP from ADP in the presence of a proton or sodium gradient. F-type ATPases consist of two structural domains, F(1) containing the extramembraneous catalytic core and F(0) containing the membrane proton channel, linked together by a central stalk and a peripheral stalk. During catalysis, ATP synthesis in the catalytic domain of F(1) is coupled via a rotary mechanism of the central stalk subunits to proton translocation. Functionally, component of the F(0) channel, it forms part of the peripheral stalk, linking F(1) to F(0). The polypeptide is ATP synthase subunit b, chloroplastic (Helianthus annuus (Common sunflower)).